The primary structure comprises 308 residues: Ornithine carbamoyltransferase (308 aa).

Carbamoyl phosphate is bound by residues 51-54 (STRT), Q78, R102, and 129-132 (HPTQ). L-ornithine is bound by residues N160, D224, and 228 to 229 (SM). Carbamoyl phosphate is bound by residues 264 to 265 (CL) and R292.

It belongs to the aspartate/ornithine carbamoyltransferase superfamily. OTCase family.

The protein localises to the cytoplasm. It catalyses the reaction carbamoyl phosphate + L-ornithine = L-citrulline + phosphate + H(+). Its pathway is amino-acid biosynthesis; L-arginine biosynthesis; L-arginine from L-ornithine and carbamoyl phosphate: step 1/3. Functionally, reversibly catalyzes the transfer of the carbamoyl group from carbamoyl phosphate (CP) to the N(epsilon) atom of ornithine (ORN) to produce L-citrulline. The sequence is that of Ornithine carbamoyltransferase from Caldicellulosiruptor saccharolyticus (strain ATCC 43494 / DSM 8903 / Tp8T 6331).